The primary structure comprises 351 residues: Methionine import ATP-binding protein MetN (351 aa).

The ABC transporter domain occupies 2 to 238; it reads IKLNHINKTY…PKHPITRELI (237 aa). 35–42 lines the ATP pocket; the sequence is GYSGAGKS.

It belongs to the ABC transporter superfamily. Methionine importer (TC 3.A.1.24) family. The complex is composed of two ATP-binding proteins (MetN), two transmembrane proteins (MetI) and a solute-binding protein (MetQ).

It localises to the cell inner membrane. It carries out the reaction L-methionine(out) + ATP + H2O = L-methionine(in) + ADP + phosphate + H(+). The catalysed reaction is D-methionine(out) + ATP + H2O = D-methionine(in) + ADP + phosphate + H(+). Its function is as follows. Part of the ABC transporter complex MetNIQ involved in methionine import. Responsible for energy coupling to the transport system. This Helicobacter hepaticus (strain ATCC 51449 / 3B1) protein is Methionine import ATP-binding protein MetN.